We begin with the raw amino-acid sequence, 404 residues long: Serine/threonine transporter SstT (404 aa).

The next 8 helical transmembrane spans lie at 17 to 37 (IGIGVVIGVMLGILAPDLTGF), 39 to 59 (ILGKLFVGGLKAIAPLLVFAL), 75 to 95 (MTLIIFLYLFGTFASALVAVL), 138 to 158 (ALATANYIGVLSWAIIFGLAL), 179 to 199 (IVVWIINLAPIGIMSLVFTTI), 212 to 232 (FLILVLVGTMVFVALVVNPLI), 287 to 307 (IPLGATINMGGAAITINVLTL), and 313 to 333 (FGIPIDFLTALLLSVVAAVSA).

It belongs to the dicarboxylate/amino acid:cation symporter (DAACS) (TC 2.A.23) family.

It localises to the cell membrane. It carries out the reaction L-serine(in) + Na(+)(in) = L-serine(out) + Na(+)(out). The catalysed reaction is L-threonine(in) + Na(+)(in) = L-threonine(out) + Na(+)(out). Involved in the import of serine and threonine into the cell, with the concomitant import of sodium (symport system). The chain is Serine/threonine transporter SstT from Streptococcus pyogenes serotype M5 (strain Manfredo).